Here is a 30-residue protein sequence, read N- to C-terminus: Hainantoxin F7-28.42 (30 aa).

Expressed by the venom gland.

The protein localises to the secreted. The chain is Hainantoxin F7-28.42 from Cyriopagopus hainanus (Chinese bird spider).